A 273-amino-acid chain; its full sequence is Cell division protein FtsQ (273 aa).

Topologically, residues 1-20 (MPPRKAHTTRRTPAKKSGVR) are cytoplasmic. A helical membrane pass occupies residues 21–43 (RRLLRLLVTGVPVLALCGVAWLW). The Periplasmic segment spans residues 44-273 (LESVRLTRIE…STQKSAMGHE (230 aa)). The region spanning 47 to 115 (VRLTRIEIVG…GTLRIAVEER (69 aa)) is the POTRA domain.

This sequence belongs to the FtsQ/DivIB family. FtsQ subfamily.

It is found in the cell inner membrane. Its function is as follows. Essential cell division protein. The sequence is that of Cell division protein FtsQ from Rhodothermus marinus (strain ATCC 43812 / DSM 4252 / R-10) (Rhodothermus obamensis).